Consider the following 315-residue polypeptide: Cobalamin biosynthesis protein CobD (315 aa).

5 helical membrane passes run 48-70, 75-94, 148-170, 208-230, and 292-314; these read IAGI…LSVQ, LHWI…TIAI, LVDG…AMLY, ITSY…SLYI, and LILL…AAYF.

This sequence belongs to the CobD/CbiB family.

Its subcellular location is the cell membrane. It participates in cofactor biosynthesis; adenosylcobalamin biosynthesis. Converts cobyric acid to cobinamide by the addition of aminopropanol on the F carboxylic group. In Leptospira interrogans serogroup Icterohaemorrhagiae serovar copenhageni (strain Fiocruz L1-130), this protein is Cobalamin biosynthesis protein CobD.